The following is a 398-amino-acid chain: MATTLATDVRLSIAHQTRFAFRLASAISSNPESTVNNAAFSPVSLHVALSLITAGAGGATRNQLAATLGEGEVEGLHALAEQVVQFVLADASNIGGPRVAFANGVFVDASLQLKPSFQELAVCKYKAEAQSVDFQTKAAEVTAQVNSWVEKVTTGLIKDILPAGSIDNTTRLVLGNALYFKGAWTDQFDPRATQSDDFYLLDGSSIQTPFMYSSEEQYISSSDGLKVLKLPYKQGGDKRQFSMYILLPEALSGLWSLAEKLSAEPEFLEQHIPRQKVALRQFKLPKFKISLGIEASDLLKGLGLLLPFGAEADLSEMVDSPMAQNLYISSIFHKAFVEVNETGTEAAATTIAKVVLRQAPPPSVLDFIVDHPFLFLIREDTSGVVLFIGHVVNPLLSS.

An RCL region spans residues 343-367 (GTEAAATTIAKVVLRQAPPPSVLDF).

It belongs to the serpin family.

Inhibits chymotrypsin, cathepsin G and trypsin in vitro. The chain is Serpin-Z2B from Triticum aestivum (Wheat).